The primary structure comprises 740 residues: UvrABC system protein B (740 aa).

The segment at Met-1 to Arg-36 is disordered. Positions Thr-8–Lys-33 are enriched in basic and acidic residues. The region spanning Lys-56–Arg-444 is the Helicase ATP-binding domain. An ATP-binding site is contributed by Gly-69 to Thr-76. The Beta-hairpin signature appears at Tyr-122 to Ile-145. The region spanning Gln-461–Val-627 is the Helicase C-terminal domain. The 36-residue stretch at Ala-651–Gln-686 folds into the UVR domain. A disordered region spans residues Glu-687–His-740. A compositionally biased stretch (basic and acidic residues) spans Thr-712–His-740.

It belongs to the UvrB family. As to quaternary structure, forms a heterotetramer with UvrA during the search for lesions. Interacts with UvrC in an incision complex.

The protein localises to the cytoplasm. Functionally, the UvrABC repair system catalyzes the recognition and processing of DNA lesions. A damage recognition complex composed of 2 UvrA and 2 UvrB subunits scans DNA for abnormalities. Upon binding of the UvrA(2)B(2) complex to a putative damaged site, the DNA wraps around one UvrB monomer. DNA wrap is dependent on ATP binding by UvrB and probably causes local melting of the DNA helix, facilitating insertion of UvrB beta-hairpin between the DNA strands. Then UvrB probes one DNA strand for the presence of a lesion. If a lesion is found the UvrA subunits dissociate and the UvrB-DNA preincision complex is formed. This complex is subsequently bound by UvrC and the second UvrB is released. If no lesion is found, the DNA wraps around the other UvrB subunit that will check the other stand for damage. The polypeptide is UvrABC system protein B (Zymomonas mobilis subsp. mobilis (strain ATCC 31821 / ZM4 / CP4)).